Here is a 280-residue protein sequence, read N- to C-terminus: Acetyl-coenzyme A carboxylase carboxyl transferase subunit beta (280 aa).

Residues 24–280 (AWIKCDKCKN…IYTLIRHTHG (257 aa)) form the CoA carboxyltransferase N-terminal domain. Zn(2+)-binding residues include Cys28, Cys31, Cys47, and Cys50. The C4-type zinc-finger motif lies at 28–50 (CDKCKNILYIEDLLKNLKICPHC).

This sequence belongs to the AccD/PCCB family. In terms of assembly, acetyl-CoA carboxylase is a heterohexamer composed of biotin carboxyl carrier protein (AccB), biotin carboxylase (AccC) and two subunits each of ACCase subunit alpha (AccA) and ACCase subunit beta (AccD). The cofactor is Zn(2+).

It is found in the cytoplasm. The catalysed reaction is N(6)-carboxybiotinyl-L-lysyl-[protein] + acetyl-CoA = N(6)-biotinyl-L-lysyl-[protein] + malonyl-CoA. It functions in the pathway lipid metabolism; malonyl-CoA biosynthesis; malonyl-CoA from acetyl-CoA: step 1/1. Its function is as follows. Component of the acetyl coenzyme A carboxylase (ACC) complex. Biotin carboxylase (BC) catalyzes the carboxylation of biotin on its carrier protein (BCCP) and then the CO(2) group is transferred by the transcarboxylase to acetyl-CoA to form malonyl-CoA. The chain is Acetyl-coenzyme A carboxylase carboxyl transferase subunit beta from Sulfurihydrogenibium sp. (strain YO3AOP1).